We begin with the raw amino-acid sequence, 153 residues long: MSQSGATVSQDCITAFNDLKLNKKYKFIVYKLSDDYKEIVIDKASESRDWEDFRETLVNATAKSRTGAVGKGPRYAVYDFEYNLASGDGIRNKITFIAWSPDDAGIQPKMIYASSKEALKRSLTGIATELQANDTDDIEYDSILKTVSKGLAA.

Residues 4-148 (SGATVSQDCI…EYDSILKTVS (145 aa)) form the ADF-H domain.

Belongs to the actin-binding proteins ADF family.

It localises to the cytoplasm. Its subcellular location is the cytoskeleton. It is found in the nucleus matrix. In terms of biological role, controls reversibly actin polymerization and depolymerization in a pH-sensitive manner. It has the ability to bind G- and F-actin in a 1:1 ratio of cofilin to actin. Binding to F-actin is regulated by tropomyosin. It is the major component of intranuclear and cytoplasmic actin rods. Required for accumulation of actin at the cell division site via depolymerizing actin at the cell ends. In association with myosin II has a role in the assembly of the contractile ring via severing actin filaments. Involved in the maintenance of the contractile ring once formed. In association with profilin and capping protein, has a role in the mitotic reorganization of the actin cytoskeleton. In Gibberella zeae (strain ATCC MYA-4620 / CBS 123657 / FGSC 9075 / NRRL 31084 / PH-1) (Wheat head blight fungus), this protein is Cofilin (COF1).